The following is a 64-amino-acid chain: Conotoxin VnMLCL-042 (64 aa).

The signal sequence occupies residues 1–19; that stretch reads MLCLPVFIILLLLASPAAP. The propeptide occupies 20-43; it reads NPLQTRIQSNLIRAGPEDANMKTD. Methionine 63 is subject to Methionine amide.

The protein belongs to the conotoxin T superfamily. As to expression, expressed by the venom duct.

It localises to the secreted. This Conus ventricosus (Mediterranean cone) protein is Conotoxin VnMLCL-042.